The sequence spans 1269 residues: DNA-directed RNA polymerase subunit beta (1269 aa).

It belongs to the RNA polymerase beta chain family. As to quaternary structure, the RNAP catalytic core consists of 2 alpha, 1 beta, 1 beta' and 1 omega subunit. When a sigma factor is associated with the core the holoenzyme is formed, which can initiate transcription.

It catalyses the reaction RNA(n) + a ribonucleoside 5'-triphosphate = RNA(n+1) + diphosphate. In terms of biological role, DNA-dependent RNA polymerase catalyzes the transcription of DNA into RNA using the four ribonucleoside triphosphates as substrates. In Porphyromonas gingivalis (strain ATCC BAA-308 / W83), this protein is DNA-directed RNA polymerase subunit beta.